A 324-amino-acid chain; its full sequence is Beta-ketoacyl-[acyl-carrier-protein] synthase III (324 aa).

Catalysis depends on residues Cys114 and His246. The segment at 247-251 (QANLR) is ACP-binding. Asn276 is an active-site residue.

The protein belongs to the thiolase-like superfamily. FabH family. In terms of assembly, homodimer.

It localises to the cytoplasm. It catalyses the reaction malonyl-[ACP] + acetyl-CoA + H(+) = 3-oxobutanoyl-[ACP] + CO2 + CoA. It functions in the pathway lipid metabolism; fatty acid biosynthesis. Catalyzes the condensation reaction of fatty acid synthesis by the addition to an acyl acceptor of two carbons from malonyl-ACP. Catalyzes the first condensation reaction which initiates fatty acid synthesis and may therefore play a role in governing the total rate of fatty acid production. Possesses both acetoacetyl-ACP synthase and acetyl transacylase activities. Its substrate specificity determines the biosynthesis of branched-chain and/or straight-chain of fatty acids. The chain is Beta-ketoacyl-[acyl-carrier-protein] synthase III from Campylobacter jejuni subsp. jejuni serotype O:6 (strain 81116 / NCTC 11828).